A 109-amino-acid chain; its full sequence is MVLKFSVSILWIQLAWVSTQLLEQSPQFLSIQEGENLTVYCNSSSVFSSLQWYRQEPGEGPVLLVTVVTGGEVKKLKRLTFQFGDARKDSSLHITAAQTGDTGLYLCAG.

Positions 1–19 are cleaved as a signal peptide; that stretch reads MVLKFSVSILWIQLAWVST. Positions 20 to 109 constitute an Ig-like domain; sequence QLLEQSPQFL…GDTGLYLCAG (90 aa). N36 and N42 each carry an N-linked (GlcNAc...) asparagine glycan. C41 and C107 are disulfide-bonded.

Alpha-beta TR is a heterodimer composed of an alpha and beta chain; disulfide-linked. The alpha-beta TR is associated with the transmembrane signaling CD3 coreceptor proteins to form the TR-CD3 (TcR or TCR). The assembly of alpha-beta TR heterodimers with CD3 occurs in the endoplasmic reticulum where a single alpha-beta TR heterodimer associates with one CD3D-CD3E heterodimer, one CD3G-CD3E heterodimer and one CD247 homodimer forming a stable octameric structure. CD3D-CD3E and CD3G-CD3E heterodimers preferentially associate with TR alpha and TR beta chains, respectively. The association of the CD247 homodimer is the last step of TcR assembly in the endoplasmic reticulum and is required for transport to the cell surface. As to quaternary structure, (Microbial infection) Interacts with Staphylococcus aureus enterotoxin H/entH.

It is found in the cell membrane. Functionally, v region of the variable domain of T cell receptor (TR) alpha chain that participates in the antigen recognition. Alpha-beta T cell receptors are antigen specific receptors which are essential to the immune response and are present on the cell surface of T lymphocytes. Recognize peptide-major histocompatibility (MH) (pMH) complexes that are displayed by antigen presenting cells (APC), a prerequisite for efficient T cell adaptive immunity against pathogens. Binding of alpha-beta TR to pMH complex initiates TR-CD3 clustering on the cell surface and intracellular activation of LCK that phosphorylates the ITAM motifs of CD3G, CD3D, CD3E and CD247 enabling the recruitment of ZAP70. In turn, ZAP70 phosphorylates LAT, which recruits numerous signaling molecules to form the LAT signalosome. The LAT signalosome propagates signal branching to three major signaling pathways, the calcium, the mitogen-activated protein kinase (MAPK) kinase and the nuclear factor NF-kappa-B (NF-kB) pathways, leading to the mobilization of transcription factors that are critical for gene expression and essential for T cell growth and differentiation. The T cell repertoire is generated in the thymus, by V-(D)-J rearrangement. This repertoire is then shaped by intrathymic selection events to generate a peripheral T cell pool of self-MH restricted, non-autoaggressive T cells. Post-thymic interaction of alpha-beta TR with the pMH complexes shapes TR structural and functional avidity. This chain is T cell receptor alpha variable 27, found in Homo sapiens (Human).